A 95-amino-acid chain; its full sequence is Small ribosomal subunit protein uS19 (95 aa).

It belongs to the universal ribosomal protein uS19 family.

Functionally, protein S19 forms a complex with S13 that binds strongly to the 16S ribosomal RNA. This Chloroflexus aggregans (strain MD-66 / DSM 9485) protein is Small ribosomal subunit protein uS19.